Consider the following 367-residue polypeptide: Nodulation protein 10 (367 aa).

11 helical membrane-spanning segments follow: residues 15-37, 46-66, 88-108, 109-129, 155-175, 183-203, 208-228, 245-265, 270-290, 312-332, and 335-355; these read FDLLRLFAACQVMFSHAWNWLHL, VFDLLFSAPGVAIFFLISGFL, IFPALFVNIAVMELALLVTGG, LNVTGILQYLFYFTVYILTAA, VLWTLTVELTFYLTLPMLLEI, GALVVAVAALGSWVMAQHFNI, NPFLSVTAGPTFWIFSMGVLA, WWLATHLAITWWVAGTSAAFI, AAPVDAFRIAVLAGLVLSAAH, MLVMHTLIAIGWVGHWWLWIV, and VGTVALAALSWALIEQPAMKL.

This sequence belongs to the acyltransferase 3 family.

The protein localises to the cell membrane. Not known. NodX allows Rhizobium leguminosarum biovar viciae strain TOM to nodulate Afghanistan peas. The chain is Nodulation protein 10 (nodX) from Rhizobium leguminosarum bv. viciae.